Consider the following 258-residue polypeptide: Tryptophan synthase alpha chain (258 aa).

Catalysis depends on proton acceptor residues E47 and D58.

Belongs to the TrpA family. Tetramer of two alpha and two beta chains.

The catalysed reaction is (1S,2R)-1-C-(indol-3-yl)glycerol 3-phosphate + L-serine = D-glyceraldehyde 3-phosphate + L-tryptophan + H2O. Its pathway is amino-acid biosynthesis; L-tryptophan biosynthesis; L-tryptophan from chorismate: step 5/5. In terms of biological role, the alpha subunit is responsible for the aldol cleavage of indoleglycerol phosphate to indole and glyceraldehyde 3-phosphate. The chain is Tryptophan synthase alpha chain from Bacillus cereus (strain ZK / E33L).